The sequence spans 479 residues: Ribosomal RNA small subunit methyltransferase F (479 aa).

S-adenosyl-L-methionine contacts are provided by residues 128 to 134 (ASAPGSK), E152, D179, and D197. The active-site Nucleophile is the C250.

The protein belongs to the class I-like SAM-binding methyltransferase superfamily. RsmB/NOP family.

Its subcellular location is the cytoplasm. The catalysed reaction is cytidine(1407) in 16S rRNA + S-adenosyl-L-methionine = 5-methylcytidine(1407) in 16S rRNA + S-adenosyl-L-homocysteine + H(+). Functionally, specifically methylates the cytosine at position 1407 (m5C1407) of 16S rRNA. The polypeptide is Ribosomal RNA small subunit methyltransferase F (Shewanella halifaxensis (strain HAW-EB4)).